Consider the following 117-residue polypeptide: DNA polymerase epsilon subunit 4 (117 aa).

The interval 1–36 (MAAAAAAGSGTPREEEGPAGEAAASQPQAPTSVPGA) is disordered. A2 carries the post-translational modification N-acetylalanine. At T11 the chain carries Phosphothreonine. Low complexity predominate over residues 19–30 (AGEAAASQPQAP). At S25 the chain carries Phosphoserine.

As to quaternary structure, component of the DNA polymerase epsilon complex consisting of four subunits: the catalytic subunit POLE and the accessory subunits POLE2, POLE3 and POLE4. Interaction with POLE3 is a prerequisite for further binding with POLE and POLE2.

Its subcellular location is the nucleus. Its function is as follows. Accessory component of the DNA polymerase epsilon complex. Participates in DNA repair and in chromosomal DNA replication. The protein is DNA polymerase epsilon subunit 4 (POLE4) of Homo sapiens (Human).